A 66-amino-acid chain; its full sequence is Beta-mammal toxin Css2 (66 aa).

The LCN-type CS-alpha/beta domain maps to 1–66 (KEGYLVSKST…VWPLPNKTCN (66 aa)). 4 disulfides stabilise this stretch: C12–C65, C16–C41, C25–C46, and C29–C48. At N66 the chain carries Asparagine amide.

Belongs to the long (4 C-C) scorpion toxin superfamily. Sodium channel inhibitor family. Beta subfamily. In terms of processing, C-terminal amidation increases its affinity for sodium channels. In terms of tissue distribution, expressed by the venom gland.

It localises to the secreted. Functionally, beta toxin that binds site-4 of sodium channels (Nav) and reduces peak current (observed on Nav1.6/SCN8A (IC(50)=307 nM)), shifts the voltage of activation toward more negative potentials (observed on Nav1.6, Nav1.1 (weak), Nav1.2 (weak), and Nav1.7 (weak)), and induces resurgent currents at negative voltages following brief and strong depolarizations (observed on Nav1.6, Nav1.1 (weak), and Nav1.7 (weak)). A reduction of peak current of Nav1.5/SCN7A has been observed in another study (IC(50)=35-40 nM). This toxin is only active on mammals. It has been shown to bind phospholipids. The protein is Beta-mammal toxin Css2 of Centruroides suffusus (Durango bark scorpion).